We begin with the raw amino-acid sequence, 222 residues long: Cytochrome b6 (222 aa).

Residues 39 to 59 form a helical membrane-spanning segment; it reads IFYCLGGITLVCFLIQFATGF. C42 contacts heme c. Heme b contacts are provided by H93 and H107. 3 helical membrane passes run 97 to 117, 123 to 143, and 193 to 213; these read ASMM…TGGF, LTWV…VTGY, and LHTF…FLMI. Heme b is bound by residues H194 and H209.

This sequence belongs to the cytochrome b family. PetB subfamily. The 4 large subunits of the cytochrome b6-f complex are cytochrome b6, subunit IV (17 kDa polypeptide, PetD), cytochrome f and the Rieske protein, while the 4 small subunits are PetG, PetL, PetM and PetN. The complex functions as a dimer. Heme b serves as cofactor. The cofactor is heme c.

The protein resides in the cellular thylakoid membrane. Component of the cytochrome b6-f complex, which mediates electron transfer between photosystem II (PSII) and photosystem I (PSI), cyclic electron flow around PSI, and state transitions. The chain is Cytochrome b6 from Trichodesmium erythraeum (strain IMS101).